The following is a 20-amino-acid chain: Antifreeze protein (20 aa).

N-glycosylated and O-glycosylated.

The protein resides in the secreted. It localises to the extracellular space. Antifreeze proteins bind to the surface of ice crystals and inhibit the growth of these crystals, this inhibition causes thermal hysteresis. Causes the shape of ice crystals to change from hexagonal to a bipyramidal shape with rugged facets. Inhibits recrystallization of ice crystals. This chain is Antifreeze protein, found in Antarctomyces psychrotrophicus.